The chain runs to 245 residues: Carboxy-S-adenosyl-L-methionine synthase (245 aa).

Residues Tyr42, 67–69, 92–93, 120–121, Asn135, and Arg202 contribute to the S-adenosyl-L-methionine site; these read GCS, DN, and DI.

It belongs to the class I-like SAM-binding methyltransferase superfamily. Cx-SAM synthase family. Homodimer.

It carries out the reaction prephenate + S-adenosyl-L-methionine = carboxy-S-adenosyl-L-methionine + 3-phenylpyruvate + H2O. In terms of biological role, catalyzes the conversion of S-adenosyl-L-methionine (SAM) to carboxy-S-adenosyl-L-methionine (Cx-SAM). In Vibrio vulnificus (strain CMCP6), this protein is Carboxy-S-adenosyl-L-methionine synthase.